A 272-amino-acid chain; its full sequence is PHD finger protein ALFIN-LIKE 6 (272 aa).

A compositionally biased stretch (gly residues) spans 1–23 (MEGGGGGGGGGGGGGGGGGGGGA). Disordered stretches follow at residues 1–24 (MEGG…GGAP) and 162–218 (QAKE…DNTL). Over residues 168-182 (PNSSSKSNKPSSKVQ) the composition is skewed to low complexity. Over residues 183-200 (SKAESRSKSKLSAPKDEE) the composition is skewed to basic and acidic residues. The span at 201 to 214 (GSGDDEGEEEEDDH) shows a compositional bias: acidic residues. A PHD-type zinc finger spans residues 216–268 (NTLCGTCGTNDGKDEFWICCDNCEKWYHGKCVKITPARAEHIKQYKCPDCTNK).

The protein belongs to the Alfin family.

The protein localises to the nucleus. Functionally, histone-binding component that specifically recognizes H3 tails trimethylated on 'Lys-4' (H3K4me3), which mark transcription start sites of virtually all active genes. This chain is PHD finger protein ALFIN-LIKE 6, found in Oryza sativa subsp. indica (Rice).